Consider the following 403-residue polypeptide: Alkaline protease 1 (403 aa).

Residues 1–21 (MQSIKRTLLLLGAILPAVLGA) form the signal peptide. A propeptide spanning residues 22–125 (PVQETRRAAE…QIYYLDGLTT (104 aa)) is cleaved from the precursor. Residues 36 to 120 (KYIVTFKPGI…YVEEDQIYYL (85 aa)) form the Inhibitor I9 domain. In terms of domain architecture, Peptidase S8 spans 130–403 (PWGLGSISHK…PNLLAYNGNA (274 aa)). Catalysis depends on charge relay system residues D162 and H193. N-linked (GlcNAc...) asparagine glycosylation is present at N253. S349 functions as the Charge relay system in the catalytic mechanism.

The protein belongs to the peptidase S8 family.

It is found in the secreted. The catalysed reaction is Hydrolysis of proteins with broad specificity, and of Bz-Arg-OEt &gt; Ac-Tyr-OEt. Does not hydrolyze peptide amides.. In terms of biological role, secreted alkaline protease that allows assimilation of proteinaceous substrates. The sequence is that of Alkaline protease 1 (alp1) from Aspergillus flavus (strain ATCC 200026 / FGSC A1120 / IAM 13836 / NRRL 3357 / JCM 12722 / SRRC 167).